A 56-amino-acid chain; its full sequence is Ovomucoid (56 aa).

In terms of domain architecture, Kazal-like spans 6–56 (VDCSEYPKPDCTLEYRPLCGSDNKTYANKCNFCNAVVESNGTLTLSHFGKC). Cystine bridges form between cysteine 8–cysteine 38, cysteine 16–cysteine 35, and cysteine 24–cysteine 56. Asparagine 45 carries N-linked (GlcNAc...) asparagine glycosylation.

Its subcellular location is the secreted. This Callipepla squamata castanogastris (Chestnut bellied scaled quail) protein is Ovomucoid.